Reading from the N-terminus, the 1353-residue chain is Stress response protein NST1 (1353 aa).

Positions 1–12 are enriched in polar residues; sequence MSSKSQQPPTGL. Disordered regions lie at residues 1–66, 216–422, 503–522, 531–618, 652–694, 727–882, 979–1119, 1140–1276, and 1308–1337; these read MSSK…FFNF, NANA…TQSS, NGLR…VEVD, DHRA…SFGS, RRSV…AEEG, LREL…AKET, GLKS…DDAF, GSLI…GAGV, and GGTA…HQQQ. Positions 16–25 are enriched in basic residues; the sequence is AAKKRAKKAA. The span at 26–45 shows a compositional bias: low complexity; that stretch reads KQSQNPQPQSAPQTSSQTPA. Pro residues predominate over residues 46–59; it reads SVPPLPPASVPDPL. Residues 218–229 are compositionally biased toward polar residues; that stretch reads NARSFPSPQQTI. Residues 242–254 are compositionally biased toward acidic residues; sequence REEEYDDEEEIEE. Residues 268–277 show a composition bias toward basic residues; it reads KKNKKKKKKG. The segment covering 287-300 has biased composition (pro residues); that stretch reads VEPPAPLPPLPPPS. The span at 317-330 shows a compositional bias: low complexity; that stretch reads LPTHQPQPLSQQPP. The segment covering 331-349 has biased composition (pro residues); the sequence is SLNPLPPPAPASAPTPTPP. Residues 368-388 show a composition bias toward low complexity; that stretch reads PARSARAAGKAPASAAPPHNA. Positions 531 to 541 are enriched in basic and acidic residues; that stretch reads DHRAPELHDHD. Positions 542-583 are enriched in acidic residues; that stretch reads PDDLDGEESEEYDDDDDYADDDELDDDDIGTDEADVGDEIDE. The span at 654 to 665 shows a compositional bias: basic and acidic residues; that stretch reads SVREEQNLRDMQ. Over residues 666–681 the composition is skewed to acidic residues; sequence EETDEEEEEEDDDESR. Basic and acidic residues-rich tracts occupy residues 682–694, 727–750, and 760–882; these read DEPM…AEEG, LREL…EAQK, and QKAE…AKET. Positions 713-944 form a coiled coil; sequence AYRERVAKQR…AAQQAQRERA (232 aa). The span at 1009 to 1021 shows a compositional bias: polar residues; sequence TNATPGRSMQKTP. Pro residues predominate over residues 1154 to 1165; that stretch reads PTPPAPIAPPNL. Composition is skewed to polar residues over residues 1174 to 1187 and 1209 to 1220; these read SDGQ…LRST and QPQQRRPTTSWD.

Belongs to the NST1 family.

The protein resides in the cytoplasm. In terms of biological role, may act as a negative regulator of salt tolerance. The polypeptide is Stress response protein NST1 (NST1) (Cryptococcus neoformans var. neoformans serotype D (strain B-3501A) (Filobasidiella neoformans)).